We begin with the raw amino-acid sequence, 264 residues long: MNQATERAVQFDVVTLFPEMFRALTDWGITSRAVKQERFGLRTWNPRDFTTDNYRTIDDRPYGGGPGMVMLAKPLEAAIGAAKAAQAEQGIASTRVVMMSPQGAPFTHERAVRMAQEPGVVVLCGRYEAIDQRLLDRCVDEEISLGDFVLSGGELPAMAMMDAVVRLLPGVLNDAQSAVQDSFVDGLLDCPHYTRPEEYEGMRVPDVLLGGHHAEIEKWRRQEALRNTLRKRPDLIVRARREKLLSRADEAWLANLAREAKNAS.

S-adenosyl-L-methionine-binding positions include Gly-125 and 145-150 (LGDFVL).

The protein belongs to the RNA methyltransferase TrmD family. As to quaternary structure, homodimer.

It is found in the cytoplasm. It catalyses the reaction guanosine(37) in tRNA + S-adenosyl-L-methionine = N(1)-methylguanosine(37) in tRNA + S-adenosyl-L-homocysteine + H(+). In terms of biological role, specifically methylates guanosine-37 in various tRNAs. This Burkholderia vietnamiensis (strain G4 / LMG 22486) (Burkholderia cepacia (strain R1808)) protein is tRNA (guanine-N(1)-)-methyltransferase.